A 144-amino-acid chain; its full sequence is Small ribosomal subunit protein uS19 (144 aa).

Belongs to the universal ribosomal protein uS19 family.

Protein S19 forms a complex with S13 that binds strongly to the 16S ribosomal RNA. This Aeropyrum pernix (strain ATCC 700893 / DSM 11879 / JCM 9820 / NBRC 100138 / K1) protein is Small ribosomal subunit protein uS19 (rps19).